Reading from the N-terminus, the 347-residue chain is GTPase Obg (347 aa).

Residues 1–158 (MFIDNVKLVL…LSVRLELKLI (158 aa)) form the Obg domain. The region spanning 159–339 (ADVGLVGFPN…LKFMLLEEVK (181 aa)) is the OBG-type G domain. GTP is bound by residues 165 to 172 (GFPNVGKS), 190 to 194 (FTTLT), 212 to 215 (DIPG), 280 to 283 (SKSD), and 320 to 322 (SSL). Residues Ser-172 and Thr-192 each contribute to the Mg(2+) site.

It belongs to the TRAFAC class OBG-HflX-like GTPase superfamily. OBG GTPase family. In terms of assembly, monomer. Requires Mg(2+) as cofactor.

It is found in the cytoplasm. Its function is as follows. An essential GTPase which binds GTP, GDP and possibly (p)ppGpp with moderate affinity, with high nucleotide exchange rates and a fairly low GTP hydrolysis rate. Plays a role in control of the cell cycle, stress response, ribosome biogenesis and in those bacteria that undergo differentiation, in morphogenesis control. The protein is GTPase Obg of Campylobacter lari (strain RM2100 / D67 / ATCC BAA-1060).